A 138-amino-acid chain; its full sequence is Basic phospholipase A2 Tbo-G6D49 (138 aa).

The signal sequence occupies residues Met1–Gly16. Disulfide bonds link Cys42–Cys131, Cys44–Cys60, Cys59–Cys111, Cys65–Cys138, Cys66–Cys104, Cys73–Cys97, and Cys91–Cys102. The Ca(2+) site is built by Tyr43, Gly45, and Gly47. The active site involves His63. Asp64 is a Ca(2+) binding site. Residue Asp105 is part of the active site.

As to quaternary structure, monomer. Requires Ca(2+) as cofactor. As to expression, expressed by the venom gland.

The protein resides in the secreted. The catalysed reaction is a 1,2-diacyl-sn-glycero-3-phosphocholine + H2O = a 1-acyl-sn-glycero-3-phosphocholine + a fatty acid + H(+). Snake venom phospholipase A2 (PLA2) that impairs hemostasis. It weakly inhibits ADP-induced platelet aggregation when tested on platelet rich plasma from human and rabbit blood (15-25% of inhibition at 5-10 ug of enzyme), and dose-dependently inhibits blood coagulation, possibly by inhibiting thrombin activation. Exhibits strong hydrolytic activities toward L-dipalmitoyl phosphatidylcholine. PLA2 catalyzes the calcium-dependent hydrolysis of the 2-acyl groups in 3-sn-phosphoglycerides. This chain is Basic phospholipase A2 Tbo-G6D49, found in Craspedocephalus borneensis (Borneo pit viper).